The sequence spans 294 residues: ATP synthase gamma chain (294 aa).

It belongs to the ATPase gamma chain family. In terms of assembly, F-type ATPases have 2 components, CF(1) - the catalytic core - and CF(0) - the membrane proton channel. CF(1) has five subunits: alpha(3), beta(3), gamma(1), delta(1), epsilon(1). CF(0) has three main subunits: a, b and c.

Its subcellular location is the cell inner membrane. Functionally, produces ATP from ADP in the presence of a proton gradient across the membrane. The gamma chain is believed to be important in regulating ATPase activity and the flow of protons through the CF(0) complex. In Paraburkholderia phytofirmans (strain DSM 17436 / LMG 22146 / PsJN) (Burkholderia phytofirmans), this protein is ATP synthase gamma chain.